Consider the following 192-residue polypeptide: WYSSMFAANIKQEPISHHHHHHHAHHSHHADSNSNASSPHQSPLPSPNPPSNTNLQLEQYLKQQQQQQQQHQQQQQPMDTLCAAAMTPSPSNNDQNSPLMWSGLPNPMQTIMPANMRPSPTAATAATTTELCAPTTTTAAIALQANDKLQALTPPMDVTPPKSPAKSQQSCAEPEKEHDLMSNSSEDMKYMA.

Disordered regions lie at residues 16-54 (SHHH…SNTN) and 152-192 (LTPP…KYMA). Over residues 17 to 28 (HHHHHHHAHHSH) the composition is skewed to basic residues. Low complexity predominate over residues 32–41 (SNSNASSPHQ). Positions 173-192 (EPEKEHDLMSNSSEDMKYMA) are enriched in basic and acidic residues.

This sequence belongs to the hunchback C2H2-type zinc-finger protein family.

The protein resides in the nucleus. Functionally, gap class segmentation protein that controls development of head structures. The polypeptide is Protein hunchback (hb) (Drosophila tanythrix (Fruit fly)).